A 490-amino-acid chain; its full sequence is Serine/threonine-protein kinase PBL35 (490 aa).

Disordered regions lie at residues 1-39 and 80-103; these read MGFD…RNSE and SAIV…SNAE. Residues 14–39 are a coiled coil; it reads SKTSNENEKKKKKRRRKKNNNVRNSE. Residues 23–33 are compositionally biased toward basic residues; sequence KKKKRRRKKNN. The span at 94 to 103 shows a compositional bias: low complexity; sequence SSTTTTSNAE. Residues 136–422 enclose the Protein kinase domain; it reads FRPESLLGEG…VEVLKPLPHL (287 aa). Residues 142–150 and Lys174 contribute to the ATP site; that span reads LGEGGFGCV. Phosphotyrosine is present on Tyr219. Catalysis depends on Asp269, which acts as the Proton acceptor. Phosphoserine is present on residues Ser273 and Ser303. Thr304 and Thr309 each carry phosphothreonine. Tyr317 is subject to Phosphotyrosine. The interval 442–490 is disordered; it reads AGSGSGSGRGFGSRNGQPVFRTLSSPHGQAGSSPYRHQIPSPKPKGATT. A compositionally biased stretch (gly residues) spans 444–454; sequence SGSGSGRGFGS. Polar residues predominate over residues 463-473; the sequence is TLSSPHGQAGS.

This sequence belongs to the protein kinase superfamily. Ser/Thr protein kinase family. In terms of assembly, interacts with SD129. In terms of processing, phosphorylated by SD129 in response to the pathogen-associated molecular pattern (PAMP) 3-OH-C10:0, a medium-chain 3-hydroxy fatty acid.

It localises to the cell membrane. The enzyme catalyses L-seryl-[protein] + ATP = O-phospho-L-seryl-[protein] + ADP + H(+). The catalysed reaction is L-threonyl-[protein] + ATP = O-phospho-L-threonyl-[protein] + ADP + H(+). Its function is as follows. Involved in chitin-triggered immune signaling and is required for reactive oxygen species (ROS) production. Acts downstream of SD129 in defense signaling triggered by the pathogen-associated molecular pattern (PAMP) 3-OH-C10:0, a medium-chain 3-hydroxy fatty acid. In Arabidopsis thaliana (Mouse-ear cress), this protein is Serine/threonine-protein kinase PBL35.